A 156-amino-acid chain; its full sequence is Endoribonuclease YbeY (156 aa).

3 residues coordinate Zn(2+): His122, His126, and His132.

It belongs to the endoribonuclease YbeY family. Requires Zn(2+) as cofactor.

Its subcellular location is the cytoplasm. Single strand-specific metallo-endoribonuclease involved in late-stage 70S ribosome quality control and in maturation of the 3' terminus of the 16S rRNA. The polypeptide is Endoribonuclease YbeY (Bacillus cereus (strain ZK / E33L)).